We begin with the raw amino-acid sequence, 464 residues long: RCC1-like G exchanging factor-like protein (464 aa).

Residues 1–37 (MALVALVAGARLGRRLSGPGLGRGHWTAAGRSRSRRE) constitute a mitochondrion transit peptide. 7 RCC1 repeats span residues 58 to 124 (ADRV…LSSK), 128 to 191 (VTKV…VLTD), 193 to 247 (EGVF…FLTD), 248 to 300 (KGEV…AVSA), 302 to 353 (GGLF…VLNG), 354 to 411 (EGHV…ALTN), and 412 to 461 (KGEL…TLAK).

As to quaternary structure, forms a regulatory protein-RNA complex, consisting of RCC1L, NGRN, RPUSD3, RPUSD4, TRUB2, FASTKD2 and 16S mt-rRNA. Interacts with 16S mt-rRNA; this interaction is direct. Interacts with OPA1; this interaction is direct. Asociates with the mitochondrial ribosome large subunit (mt-LSU). In terms of assembly, asociates with the mitochondrial ribosome small subunit (mt-SSU). As to expression, ubiquitous.

Its subcellular location is the mitochondrion membrane. The protein localises to the mitochondrion inner membrane. Guanine nucleotide exchange factor (GEF) for mitochondrial dynamin-related GTPase OPA1. Activates OPA1, by exchanging bound GDP for free GTP, and drives OPA1 and MFN1-dependent mitochondrial fusion. Plays an essential role in mitochondrial ribosome biogenesis. As a component of a functional protein-RNA module, consisting of RCC1L, NGRN, RPUSD3, RPUSD4, TRUB2, FASTKD2 and 16S mitochondrial ribosomal RNA (16S mt-rRNA), controls 16S mt-rRNA abundance and is required for intra-mitochondrial translation of core subunits of the oxidative phosphorylation system. Functionally, plays an essential role in mitochondrial ribosome biogenesis via its association with GTPases that play a role in the assembly of the large ribosome subunit. Its function is as follows. Plays an essential role in mitochondrial ribosome biogenesis via its association with GTPases that play a role in the assembly of the small ribosome subunit. This Homo sapiens (Human) protein is RCC1-like G exchanging factor-like protein.